The chain runs to 498 residues: ATP synthase subunit beta, chloroplastic (498 aa).

An ATP-binding site is contributed by 172-179 (GGAGVGKT).

Belongs to the ATPase alpha/beta chains family. F-type ATPases have 2 components, CF(1) - the catalytic core - and CF(0) - the membrane proton channel. CF(1) has five subunits: alpha(3), beta(3), gamma(1), delta(1), epsilon(1). CF(0) has four main subunits: a(1), b(1), b'(1) and c(9-12).

The protein resides in the plastid. It localises to the chloroplast thylakoid membrane. It carries out the reaction ATP + H2O + 4 H(+)(in) = ADP + phosphate + 5 H(+)(out). Functionally, produces ATP from ADP in the presence of a proton gradient across the membrane. The catalytic sites are hosted primarily by the beta subunits. This chain is ATP synthase subunit beta, chloroplastic, found in Agrostis stolonifera (Creeping bentgrass).